Here is a 219-residue protein sequence, read N- to C-terminus: Ribose-5-phosphate isomerase A (219 aa).

Residues 28–31 (TGST), 81–84 (DGAD), and 94–97 (KGGG) contribute to the substrate site. E103 serves as the catalytic Proton acceptor. K121 lines the substrate pocket.

The protein belongs to the ribose 5-phosphate isomerase family. In terms of assembly, homodimer.

The enzyme catalyses aldehydo-D-ribose 5-phosphate = D-ribulose 5-phosphate. It participates in carbohydrate degradation; pentose phosphate pathway; D-ribose 5-phosphate from D-ribulose 5-phosphate (non-oxidative stage): step 1/1. Functionally, catalyzes the reversible conversion of ribose-5-phosphate to ribulose 5-phosphate. In Shewanella pealeana (strain ATCC 700345 / ANG-SQ1), this protein is Ribose-5-phosphate isomerase A.